The chain runs to 511 residues: Cytochrome P450 4B1 (511 aa).

Heme contacts are provided by Glu-315 and Cys-453.

It belongs to the cytochrome P450 family. Heme serves as cofactor.

Its subcellular location is the endoplasmic reticulum membrane. The protein localises to the microsome membrane. The catalysed reaction is an organic molecule + reduced [NADPH--hemoprotein reductase] + O2 = an alcohol + oxidized [NADPH--hemoprotein reductase] + H2O + H(+). In terms of biological role, cytochromes P450 are a group of heme-thiolate monooxygenases. In liver microsomes, this enzyme is involved in an NADPH-dependent electron transport pathway. It oxidizes a variety of structurally unrelated compounds, including steroids, fatty acids, and xenobiotics. The protein is Cytochrome P450 4B1 (Cyp4b1) of Rattus norvegicus (Rat).